The primary structure comprises 90 residues: MKIAIFTVVLALAVFAVLSFGWEANEKALSEEFTELIHEKEAASETEARECRYFWGECHDHMPCCDWLVCRYKWPITYNICVWNRTFPEK.

The signal sequence occupies residues 1–19 (MKIAIFTVVLALAVFAVLS). The propeptide occupies 20-50 (FGWEANEKALSEEFTELIHEKEAASETEARE). Disulfide bonds link cysteine 51-cysteine 65, cysteine 58-cysteine 70, and cysteine 64-cysteine 81.

Belongs to the neurotoxin 10 (Hwtx-1) family. 13 (Hntx-13) subfamily. Expressed by the venom gland.

Its subcellular location is the secreted. Its function is as follows. Ion channel inhibitor. The polypeptide is U7-theraphotoxin-Hhn1a 2 (Cyriopagopus hainanus (Chinese bird spider)).